Here is a 75-residue protein sequence, read N- to C-terminus: MKNKPDDRRDNVDKIQYNITKTIQNCELADEMIAKTDDEKTKKTLIEKNERRREALDGMREEIKDEARDKKNGYM.

A disordered region spans residues 53-75 (REALDGMREEIKDEARDKKNGYM).

It belongs to the Tlp family.

This Clostridium botulinum (strain ATCC 19397 / Type A) protein is Protein Tlp homolog.